The following is a 261-amino-acid chain: Snake venom serine protease (261 aa).

An N-terminal signal peptide occupies residues 1–20; that stretch reads MALIGVLANLLILCLSYART. Residues 21-24 constitute a propeptide that is removed on maturation; the sequence is APDR. Residues 25–249 enclose the Peptidase S1 domain; the sequence is IIGGLECNQN…YIDWIQDIMA (225 aa). Cystine bridges form between Cys31/Cys163, Cys50/Cys66, Cys98/Cys256, Cys142/Cys210, Cys174/Cys189, and Cys200/Cys225. His65 acts as the Charge relay system in catalysis. An N-linked (GlcNAc...) asparagine glycan is attached at Asn103. The active-site Charge relay system is Asp110. N-linked (GlcNAc...) asparagine glycosylation is found at Asn117 and Asn121. Ser204 serves as the catalytic Charge relay system.

The protein belongs to the peptidase S1 family. Snake venom subfamily. As to quaternary structure, monomer. As to expression, expressed by the venom gland.

Its subcellular location is the secreted. Its function is as follows. Snake venom serine protease that may act in the hemostasis system of the prey. This chain is Snake venom serine protease, found in Philodryas olfersii (Green snake).